We begin with the raw amino-acid sequence, 213 residues long: MARERQEMVVELKRYGISNARVLDAFLTVRRHLFVDAQSRPYAYSDNAMPIGFGQTISQPYTVAYMTSLLVERVPSGKVLEIGTGSGYQAAILAELGYRVYTIERIAGLYAAAGRVLDALGLPVHPRLGDGTLGWPEEAPFDGIIVTAAAPREPHTLMSQLAEGGVLVVPIGDLGSQQMTVIRRRGERFEHEIFHNFAFVPLCGREGWADNNE.

Ser58 is an active-site residue.

It belongs to the methyltransferase superfamily. L-isoaspartyl/D-aspartyl protein methyltransferase family.

It localises to the cytoplasm. The catalysed reaction is [protein]-L-isoaspartate + S-adenosyl-L-methionine = [protein]-L-isoaspartate alpha-methyl ester + S-adenosyl-L-homocysteine. Catalyzes the methyl esterification of L-isoaspartyl residues in peptides and proteins that result from spontaneous decomposition of normal L-aspartyl and L-asparaginyl residues. It plays a role in the repair and/or degradation of damaged proteins. The chain is Protein-L-isoaspartate O-methyltransferase from Chlorobaculum tepidum (strain ATCC 49652 / DSM 12025 / NBRC 103806 / TLS) (Chlorobium tepidum).